Consider the following 402-residue polypeptide: Multidrug resistance protein MdtG (402 aa).

Transmembrane regions (helical) follow at residues 14–34, 52–72, 90–110, 113–133, 149–169, 171–191, 219–239, 254–274, 288–308, 318–338, and 376–396; these read LYIV…IMPF, LWTG…APFW, LGMA…QLLI, ALLG…ATQV, AVSG…LYGL, PVFF…LFFV, VICL…VTPI, LAFI…ISAP, VLIF…LVSN, LLGA…LYNI, and AVFY…WISF.

It belongs to the major facilitator superfamily. DHA1 family. MdtG (TC 2.A.1.2.20) subfamily.

The protein localises to the cell inner membrane. The chain is Multidrug resistance protein MdtG from Proteus mirabilis (strain HI4320).